A 113-amino-acid polypeptide reads, in one-letter code: Large ribosomal subunit protein bL17 (113 aa).

This sequence belongs to the bacterial ribosomal protein bL17 family. As to quaternary structure, part of the 50S ribosomal subunit. Contacts protein L32.

This Alkaliphilus metalliredigens (strain QYMF) protein is Large ribosomal subunit protein bL17.